A 738-amino-acid polypeptide reads, in one-letter code: Multifunctional procollagen lysine hydroxylase and glycosyltransferase LH3 (738 aa).

The N-terminal stretch at 1–24 (MTSSGPGPRFLLLLPLLLPPAASA) is a signal peptide. Residues 25–290 (SDRPRGRDPV…FCNQDRRTLP (266 aa)) form a required for glycosyltransferase activity region. Residue 44 to 46 (VAT) coordinates UDP. A glycan (N-linked (GlcNAc...) asparagine) is linked at Asn63. Residues Asp112, Asp115, and His253 each contribute to the Mn(2+) site. UDP is bound at residue 112–114 (DSY). 256 to 259 (GPTK) is a UDP binding site. 2 disulfide bridges follow: Cys279-Cys282 and Cys379-Cys385. Residues 295–520 (PPRVFLAVFV…EFGRLLATSR (226 aa)) are accessory region. N-linked (GlcNAc...) asparagine glycosylation is present at Asn548. A disulfide bridge links Cys563 with Cys698. 2-oxoglutarate is bound by residues Arg599 and Tyr656. In terms of domain architecture, Fe2OG dioxygenase spans 647 to 738 (RAVMNFVVRY…RYIMVSFVDP (92 aa)). Fe cation is bound by residues His667 and Asp669. Residues 672–715 (TFTLNVALNHKGLDYEGGGCRFLRYDCVISSPRKGWALLHPGRL) are important for dimerization. A 2-oxoglutarate-binding site is contributed by Asn676. Residue His719 coordinates Fe cation. Arg729 is a 2-oxoglutarate binding site.

Homodimer. The cofactor is Fe(2+). L-ascorbate serves as cofactor. Requires Mn(2+) as cofactor.

It is found in the rough endoplasmic reticulum. Its subcellular location is the endoplasmic reticulum lumen. The protein localises to the endoplasmic reticulum membrane. The protein resides in the secreted. It localises to the extracellular space. The catalysed reaction is L-lysyl-[collagen] + 2-oxoglutarate + O2 = (5R)-5-hydroxy-L-lysyl-[collagen] + succinate + CO2. It catalyses the reaction (5R)-5-hydroxy-L-lysyl-[collagen] + UDP-alpha-D-galactose = (5R)-5-O-(beta-D-galactosyl)-5-hydroxy-L-lysyl-[collagen] + UDP + H(+). It carries out the reaction (5R)-5-O-(beta-D-galactosyl)-5-hydroxy-L-lysyl-[collagen] + UDP-alpha-D-glucose = (5R)-5-O-[alpha-D-glucosyl-(1-&gt;2)-beta-D-galactosyl]-5-hydroxy-L-lysyl-[collagen] + UDP + H(+). Its function is as follows. Multifunctional enzyme that catalyzes a series of post-translational modifications on Lys residues in procollagen. Plays a redundant role in catalyzing the formation of hydroxylysine residues in -Xaa-Lys-Gly- sequences in collagens. Plays a redundant role in catalyzing the transfer of galactose onto hydroxylysine groups, giving rise to galactosyl 5-hydroxylysine. Has an essential role by catalyzing the subsequent transfer of glucose moieties, giving rise to 1,2-glucosylgalactosyl-5-hydroxylysine residues. Catalyzes hydroxylation and glycosylation of Lys residues in the MBL1 collagen-like domain, giving rise to hydroxylysine and 1,2-glucosylgalactosyl-5-hydroxylysine residues. Catalyzes hydroxylation and glycosylation of Lys residues in the ADIPOQ collagen-like domain, giving rise to hydroxylysine and 1,2-glucosylgalactosyl-5-hydroxylysine residues. Essential for normal biosynthesis and secretion of type IV collagens. Essential for normal formation of basement membranes. The sequence is that of Multifunctional procollagen lysine hydroxylase and glycosyltransferase LH3 (PLOD3) from Pongo abelii (Sumatran orangutan).